Reading from the N-terminus, the 182-residue chain is Transcription termination/antitermination protein NusG (182 aa).

The protein belongs to the NusG family.

Participates in transcription elongation, termination and antitermination. The protein is Transcription termination/antitermination protein NusG of Chlamydia trachomatis serovar D (strain ATCC VR-885 / DSM 19411 / UW-3/Cx).